The primary structure comprises 487 residues: Beta-barrel assembly-enhancing protease (487 aa).

The N-terminal stretch at methionine 1–alanine 27 is a signal peptide. Histidine 136 is a Zn(2+) binding site. Glutamate 137 is a catalytic residue. The Zn(2+) site is built by histidine 140 and glutamate 201. Aspartate 205 functions as the Proton donor in the catalytic mechanism. 4 TPR repeats span residues arginine 309 to asparagine 342, tryptophan 344 to proline 376, valine 377 to aspartate 409, and aspartate 427 to glycine 460.

The protein belongs to the peptidase M48 family. BepA subfamily. Zn(2+) is required as a cofactor.

Its subcellular location is the periplasm. Functions both as a chaperone and a metalloprotease. Maintains the integrity of the outer membrane by promoting either the assembly or the elimination of outer membrane proteins, depending on their folding state. The protein is Beta-barrel assembly-enhancing protease of Escherichia coli O157:H7.